Here is a 330-residue protein sequence, read N- to C-terminus: Chromatin modification-related protein EAF3 (330 aa).

Residues 5-62 enclose the Tudor-knot domain; that stretch reads DGEKVLCFHGPLIYAAKILKAEKWTGEENVTGQVGPHYLVHYDGWKKTWDEWVPETRL. A disordered region spans residues 96–129; sequence TSAASSLKRAKDSELPDRKSASRGTKRSREHVEA. A compositionally biased stretch (basic and acidic residues) spans 104–115; it reads RAKDSELPDRKS. The region spanning 135 to 329 is the MRG domain; it reads KRPEVKISLP…ASPAYHRISS (195 aa).

The protein belongs to the MRG family. Component of the NuA4 histone acetyltransferase complex.

The protein localises to the nucleus. In terms of biological role, involved in deacetylation of histones, chromatin assembly and chromosome segregation. May act as a transcriptional oscillator, directing histone deacetylases to specific chromosomal domains. Component of the NuA4 histone acetyltransferase complex which is involved in transcriptional activation of selected genes principally by acetylation of nucleosomal histone H4 and H2A. The NuA4 complex is also involved in DNA repair. The chain is Chromatin modification-related protein EAF3 (EAF3) from Mycosarcoma maydis (Corn smut fungus).